Consider the following 178-residue polypeptide: Large ribosomal subunit protein bL25 (178 aa).

This sequence belongs to the bacterial ribosomal protein bL25 family. CTC subfamily. In terms of assembly, part of the 50S ribosomal subunit; part of the 5S rRNA/L5/L18/L25 subcomplex. Contacts the 5S rRNA. Binds to the 5S rRNA independently of L5 and L18.

Functionally, this is one of the proteins that binds to the 5S RNA in the ribosome where it forms part of the central protuberance. This Helicobacter pylori (strain G27) protein is Large ribosomal subunit protein bL25.